Consider the following 322-residue polypeptide: Putative T-box protein 11 (322 aa).

The segment at residues 16–185 is a DNA-binding region (T-box); that stretch reads LWRSCHEYDN…NNPYSTGSRK (170 aa). Positions 171–182 are enriched in polar residues; it reads TLKTNNNPYSTG. Positions 171–214 are disordered; sequence TLKTNNNPYSTGSRKDRRRERQSPVYSEGTSSEKSISPPPAKKI.

The protein localises to the nucleus. This is Putative T-box protein 11 (tbx-11) from Caenorhabditis elegans.